Here is a 212-residue protein sequence, read N- to C-terminus: Actin-depolymerizing factor 1, isoforms a/b (212 aa).

Positions 3–159 (SGVMVDPDVQ…SHKELLNNCP (157 aa)) constitute an ADF-H domain.

This sequence belongs to the actin-binding proteins ADF family. As to quaternary structure, interacts with F-actin.

Functionally, depolymerizes growing actin filaments in muscle cells; required for the assembly of actin filaments into the functional contractile myofilament lattice of muscle. Competes with unc-87 for actin binding and inhibits the actin-bundling activity of unc-87. This Caenorhabditis elegans protein is Actin-depolymerizing factor 1, isoforms a/b.